Consider the following 503-residue polypeptide: Cytochrome P450 3A25 (503 aa).

C442 is a heme binding site.

The protein belongs to the cytochrome P450 family. Heme is required as a cofactor.

The protein resides in the endoplasmic reticulum membrane. It is found in the microsome membrane. It catalyses the reaction an organic molecule + reduced [NADPH--hemoprotein reductase] + O2 = an alcohol + oxidized [NADPH--hemoprotein reductase] + H2O + H(+). Functionally, cytochromes P450 are a group of heme-thiolate monooxygenases. In liver microsomes, this enzyme is involved in an NADPH-dependent electron transport pathway. It oxidizes a variety of structurally unrelated compounds, including steroids, fatty acids, and xenobiotics. In Mus musculus (Mouse), this protein is Cytochrome P450 3A25 (Cyp3a25).